The chain runs to 174 residues: Protein GrpE (174 aa).

The protein belongs to the GrpE family. As to quaternary structure, homodimer.

The protein localises to the cytoplasm. Its function is as follows. Participates actively in the response to hyperosmotic and heat shock by preventing the aggregation of stress-denatured proteins, in association with DnaK and GrpE. It is the nucleotide exchange factor for DnaK and may function as a thermosensor. Unfolded proteins bind initially to DnaJ; upon interaction with the DnaJ-bound protein, DnaK hydrolyzes its bound ATP, resulting in the formation of a stable complex. GrpE releases ADP from DnaK; ATP binding to DnaK triggers the release of the substrate protein, thus completing the reaction cycle. Several rounds of ATP-dependent interactions between DnaJ, DnaK and GrpE are required for fully efficient folding. This is Protein GrpE from Pseudothermotoga lettingae (strain ATCC BAA-301 / DSM 14385 / NBRC 107922 / TMO) (Thermotoga lettingae).